Here is a 412-residue protein sequence, read N- to C-terminus: Histidinol dehydrogenase (412 aa).

NAD(+) contacts are provided by Tyr118, Gln176, and Asn199. 3 residues coordinate substrate: Thr222, Gln244, and His247. Gln244 and His247 together coordinate Zn(2+). Catalysis depends on proton acceptor residues Glu311 and His312. Positions 312, 345, 399, and 404 each coordinate substrate. Position 345 (Asp345) interacts with Zn(2+). Residue His404 participates in Zn(2+) binding.

This sequence belongs to the histidinol dehydrogenase family. Zn(2+) is required as a cofactor.

It catalyses the reaction L-histidinol + 2 NAD(+) + H2O = L-histidine + 2 NADH + 3 H(+). It functions in the pathway amino-acid biosynthesis; L-histidine biosynthesis; L-histidine from 5-phospho-alpha-D-ribose 1-diphosphate: step 9/9. Catalyzes the sequential NAD-dependent oxidations of L-histidinol to L-histidinaldehyde and then to L-histidine. This Thermus thermophilus (strain ATCC BAA-163 / DSM 7039 / HB27) protein is Histidinol dehydrogenase.